The sequence spans 170 residues: Transcription factor E (170 aa).

An HTH TFE/IIEalpha-type domain is found at 1–93 (MKDVYLYIVE…TWYVDDEIIK (93 aa)).

It belongs to the TFE family. In terms of assembly, monomer. Interaction with RNA polymerase subunits RpoF and RpoE is necessary for Tfe stimulatory transcription activity. Able to interact with Tbp and RNA polymerase in the absence of DNA promoter. Interacts both with the preinitiation and elongation complexes.

Transcription factor that plays a role in the activation of archaeal genes transcribed by RNA polymerase. Facilitates transcription initiation by enhancing TATA-box recognition by TATA-box-binding protein (Tbp), and transcription factor B (Tfb) and RNA polymerase recruitment. Not absolutely required for transcription in vitro, but particularly important in cases where Tbp or Tfb function is not optimal. It dynamically alters the nucleic acid-binding properties of RNA polymerases by stabilizing the initiation complex and destabilizing elongation complexes. Seems to translocate with the RNA polymerase following initiation and acts by binding to the non template strand of the transcription bubble in elongation complexes. This is Transcription factor E from Pyrobaculum aerophilum (strain ATCC 51768 / DSM 7523 / JCM 9630 / CIP 104966 / NBRC 100827 / IM2).